The chain runs to 195 residues: MRLLLLLLVAASAMVRSEASANLGGVPSKRLKMQYATGPLLKFQICVSUGYRRVFEEYMRVISQRYPDIRIEGENYLPQPIYRHIASFLSVFKLVLIGLIIVGKDPFAFFGMQAPSIWQWGQENKVYACMMVFFLSNMIENQCMSTGAFEITLNDVPVWSKLESGHLPSMQQLVQILDNEMKLNVHMDSIPHHRS.

Positions 1–19 are cleaved as a signal peptide; the sequence is MRLLLLLLVAASAMVRSEA. Positions 46 to 49 form a cross-link, cysteinyl-selenocysteine (Cys-Sec); sequence CVSU. Position 49 (selenocysteine 49) is a non-standard amino acid, selenocysteine. A helical transmembrane segment spans residues 85–103; the sequence is IASFLSVFKLVLIGLIIVG.

Belongs to the SelWTH family. Selenoprotein T subfamily. In terms of processing, may contain a selenide-sulfide bond between Cys-46 and Sec-49. This bond is speculated to serve as redox-active pair. In terms of tissue distribution, ubiquitous. Highly expressed in the endocrine pancreas.

The protein resides in the endoplasmic reticulum membrane. It carries out the reaction [thioredoxin]-dithiol + NADP(+) = [thioredoxin]-disulfide + NADPH + H(+). Selenoprotein with thioredoxin reductase-like oxidoreductase activity. Protects dopaminergic neurons against oxidative stress and cell death. Involved in ADCYAP1/PACAP-induced calcium mobilization and neuroendocrine secretion. Plays a role in fibroblast anchorage and redox regulation. In gastric smooth muscle, modulates the contraction processes through the regulation of calcium release and MYLK activation. In pancreatic islets, involved in the control of glucose homeostasis, contributes to prolonged ADCYAP1/PACAP-induced insulin secretion. This chain is Thioredoxin reductase-like selenoprotein T, found in Homo sapiens (Human).